The primary structure comprises 154 residues: Transcriptional repressor NrdR (154 aa).

A zinc finger lies at 3-34; sequence CPFCRHPDSRVIDSRETDEGQAIRRRRSCPEC. Residues 46–136 form the ATP-cone domain; the sequence is LAVVKRSGVT…VYRSFESADD (91 aa).

The protein belongs to the NrdR family. Zn(2+) serves as cofactor.

Negatively regulates transcription of bacterial ribonucleotide reductase nrd genes and operons by binding to NrdR-boxes. This chain is Transcriptional repressor NrdR, found in Mycobacterium avium (strain 104).